Consider the following 502-residue polypeptide: Lysine--tRNA ligase (502 aa).

Mg(2+) contacts are provided by E409 and E416.

The protein belongs to the class-II aminoacyl-tRNA synthetase family. As to quaternary structure, homodimer. Mg(2+) is required as a cofactor.

It is found in the cytoplasm. It carries out the reaction tRNA(Lys) + L-lysine + ATP = L-lysyl-tRNA(Lys) + AMP + diphosphate. This Prochlorococcus marinus (strain SARG / CCMP1375 / SS120) protein is Lysine--tRNA ligase.